The following is a 131-amino-acid chain: Protein FAM107B (131 aa).

N-acetylalanine is present on Ala2. Residues 39–79 form a disordered region; it reads MNQKRGLAPQNKPELQKVMEKRRRDQVIKQKEEEAQKKKSD. N6-acetyllysine is present on Lys50. Residues 52-79 show a composition bias toward basic and acidic residues; it reads ELQKVMEKRRRDQVIKQKEEEAQKKKSD. The stretch at 61-112 forms a coiled coil; the sequence is RRDQVIKQKEEEAQKKKSDLEIELLKRQQKLEQLELEKQKLQEEQENAPEFV.

It belongs to the FAM107 family. As to expression, expressed in the hippocampus and hypothalamus. Expressed in the pontine nuclei and reticulotegmental nucleus. Expressed in Purkinje cell and nuclear layers of the cerebelum. Expressed in the choroid plexus. Expressed in hippocampal granule neurons of the dente gyrus.

This Mus musculus (Mouse) protein is Protein FAM107B.